A 336-amino-acid polypeptide reads, in one-letter code: Holliday junction branch migration complex subunit RuvB (336 aa).

Residues 1-182 (MKERIVNLET…FGMSFRMQFY (182 aa)) are large ATPase domain (RuvB-L). ATP is bound by residues L21, R22, G63, K66, T67, S68, 129–131 (EDF), R172, Y182, and R219. T67 is a binding site for Mg(2+). The small ATPAse domain (RuvB-S) stretch occupies residues 183–253 (SPSELALIIK…ITLHALNELG (71 aa)). The tract at residues 256–336 (ELGFDEADLA…IPTLKSQTLF (81 aa)) is head domain (RuvB-H). R310 and R315 together coordinate DNA.

It belongs to the RuvB family. In terms of assembly, homohexamer. Forms an RuvA(8)-RuvB(12)-Holliday junction (HJ) complex. HJ DNA is sandwiched between 2 RuvA tetramers; dsDNA enters through RuvA and exits via RuvB. An RuvB hexamer assembles on each DNA strand where it exits the tetramer. Each RuvB hexamer is contacted by two RuvA subunits (via domain III) on 2 adjacent RuvB subunits; this complex drives branch migration. In the full resolvosome a probable DNA-RuvA(4)-RuvB(12)-RuvC(2) complex forms which resolves the HJ.

The protein localises to the cytoplasm. The enzyme catalyses ATP + H2O = ADP + phosphate + H(+). The RuvA-RuvB-RuvC complex processes Holliday junction (HJ) DNA during genetic recombination and DNA repair, while the RuvA-RuvB complex plays an important role in the rescue of blocked DNA replication forks via replication fork reversal (RFR). RuvA specifically binds to HJ cruciform DNA, conferring on it an open structure. The RuvB hexamer acts as an ATP-dependent pump, pulling dsDNA into and through the RuvAB complex. RuvB forms 2 homohexamers on either side of HJ DNA bound by 1 or 2 RuvA tetramers; 4 subunits per hexamer contact DNA at a time. Coordinated motions by a converter formed by DNA-disengaged RuvB subunits stimulates ATP hydrolysis and nucleotide exchange. Immobilization of the converter enables RuvB to convert the ATP-contained energy into a lever motion, pulling 2 nucleotides of DNA out of the RuvA tetramer per ATP hydrolyzed, thus driving DNA branch migration. The RuvB motors rotate together with the DNA substrate, which together with the progressing nucleotide cycle form the mechanistic basis for DNA recombination by continuous HJ branch migration. Branch migration allows RuvC to scan DNA until it finds its consensus sequence, where it cleaves and resolves cruciform DNA. The polypeptide is Holliday junction branch migration complex subunit RuvB (Helicobacter pylori (strain HPAG1)).